Reading from the N-terminus, the 882-residue chain is MMAKKRIYEVAKELGIENKIVVKKAQDLGFDVKSHMSSLDDKQVSKLVDSFKSANTTKPSTEKDSKNSSRKEKTKIKVSVGAIRRRDNKNDHDNRHGNNKRRNNKFKKQQNDRRAERNKPQTEAKSAARDLLNKFKKKQRAEASELNAQTEASRRKWHQEQNPQRSKVKKVENTRKPKEEKLEGAAAVKARVQASQKPVGPKIIKPSPARNKAKRPTVKKVEPIAPVVPAPQKEETKPTRKKDFTRKKREVPDYERERSEHSDKARRRRNKKNKRINQSKEIKKQPTQRKERPLPETLVYEEGMNAQDLGKLLHREPAEIVKKLFMLGVMTNQNQSLDKDTIELLAAEYGIEAQEKVHEDISDIDTLYTKEMEESKASKHQEKRPPVVTIMGHVDHGKTTLLDRLRHTNVSEHEAGGITQKIGAYQVRIDDRLITFLDTPGHAAFSNMRARGAEITDIVVLVVAADDGVMPQTIEAIDHAKSAGVPIIVAVNKIDKPGANPDHVMEQLMKYGLVPEDWGGDTIFVKISAKTGKNVEELLQMILLQADVMELKADPDQKAIGTVIEARLDKGRGSVADVLVQQGTLKVGDPIVVGDTFGRVRVMTNDKGRRVKKATPSAPVEITGLNDVPEAADKLVVFEDEKTARSVGEQRAKNALEKQRENVQHVTLDNLFDTMKKENMKEVDIVLKADVQGSAEALQQSLEKIEVEGVRVNIIHSGVGAINESDVTLAGASNAFIVGFNVRPTNTAKSQADAEGVDIRLYNIIYKVMDDVEAAMKGMLEPTYEEKVTGNLTVRETWKVSKIGTIAGAFVDNGYVTRDSGIRVIRDGIVKYDGKVASLKRFKDDVKEVKQGFDCGITIENFNDIKVDDQLEAYEMQEVPVK.

The segment at serine 50–valine 299 is disordered. Composition is skewed to basic and acidic residues over residues serine 60–lysine 71 and arginine 84–histidine 96. Basic residues predominate over residues glycine 97–lysine 108. 4 stretches are compositionally biased toward basic and acidic residues: residues glutamine 109–asparagine 133, lysine 169–glutamate 183, glutamine 232–lysine 242, and glutamate 250–aspartate 263. A compositionally biased stretch (basic residues) spans lysine 264–asparagine 277. A compositionally biased stretch (basic and acidic residues) spans glutamine 278–leucine 294. The region spanning lysine 383–lysine 552 is the tr-type G domain. Positions glycine 392 to threonine 399 are G1. Glycine 392–threonine 399 contacts GTP. Positions glycine 417–lysine 421 are G2. The interval aspartate 438–glycine 441 is G3. GTP-binding positions include aspartate 438–histidine 442 and asparagine 492–aspartate 495. The interval asparagine 492–aspartate 495 is G4. The interval serine 528 to lysine 530 is G5.

This sequence belongs to the TRAFAC class translation factor GTPase superfamily. Classic translation factor GTPase family. IF-2 subfamily.

Its subcellular location is the cytoplasm. Its function is as follows. One of the essential components for the initiation of protein synthesis. Protects formylmethionyl-tRNA from spontaneous hydrolysis and promotes its binding to the 30S ribosomal subunits. Also involved in the hydrolysis of GTP during the formation of the 70S ribosomal complex. This chain is Translation initiation factor IF-2, found in Lactobacillus gasseri (strain ATCC 33323 / DSM 20243 / BCRC 14619 / CIP 102991 / JCM 1131 / KCTC 3163 / NCIMB 11718 / NCTC 13722 / AM63).